Here is a 475-residue protein sequence, read N- to C-terminus: Ribulose bisphosphate carboxylase large chain (475 aa).

Positions 1-2 are excised as a propeptide; sequence MS. At Pro-3 the chain carries N-acetylproline. Lys-14 carries the N6,N6,N6-trimethyllysine modification. Substrate contacts are provided by Asn-123 and Thr-173. Lys-175 acts as the Proton acceptor in catalysis. Residue Lys-177 coordinates substrate. Residues Lys-201, Asp-203, and Glu-204 each contribute to the Mg(2+) site. Position 201 is an N6-carboxylysine (Lys-201). Residue His-294 is the Proton acceptor of the active site. Substrate is bound by residues Arg-295, His-327, and Ser-379.

This sequence belongs to the RuBisCO large chain family. Type I subfamily. As to quaternary structure, heterohexadecamer of 8 large chains and 8 small chains; disulfide-linked. The disulfide link is formed within the large subunit homodimers. Mg(2+) is required as a cofactor. In terms of processing, the disulfide bond which can form in the large chain dimeric partners within the hexadecamer appears to be associated with oxidative stress and protein turnover.

It localises to the plastid. The protein resides in the chloroplast. The enzyme catalyses 2 (2R)-3-phosphoglycerate + 2 H(+) = D-ribulose 1,5-bisphosphate + CO2 + H2O. The catalysed reaction is D-ribulose 1,5-bisphosphate + O2 = 2-phosphoglycolate + (2R)-3-phosphoglycerate + 2 H(+). In terms of biological role, ruBisCO catalyzes two reactions: the carboxylation of D-ribulose 1,5-bisphosphate, the primary event in carbon dioxide fixation, as well as the oxidative fragmentation of the pentose substrate in the photorespiration process. Both reactions occur simultaneously and in competition at the same active site. This is Ribulose bisphosphate carboxylase large chain from Carica papaya (Papaya).